The primary structure comprises 422 residues: Metallocarboxypeptidase A (422 aa).

The signal sequence occupies residues 1–17 (MRSVLSLALLAANVVTA). A propeptide spans 18 to 112 (AVVSPFDYSG…FEAYSAGYAP (95 aa)) (activation peptide). One can recognise a Peptidase M14 domain in the interval 119–419 (SYHSYQDHIS…AGTVAMLKAV (301 aa)). The Zn(2+) site is built by His-179 and Glu-182. Residues 179-182 (HARE), Arg-237, and 254-255 (NR) contribute to the substrate site. Cys-248 and Cys-271 are oxidised to a cystine. His-309 serves as a coordination point for Zn(2+). 310 to 311 (SY) provides a ligand contact to substrate. Glu-385 functions as the Proton donor/acceptor in the catalytic mechanism.

This sequence belongs to the peptidase M14 family. Zn(2+) serves as cofactor.

The protein localises to the secreted. Its function is as follows. Extracellular metalloprotease that contributes to pathogenicity. The sequence is that of Metallocarboxypeptidase A (MCPA) from Trichophyton equinum (Horse ringworm fungus).